The chain runs to 305 residues: Porphobilinogen deaminase (305 aa).

An S-(dipyrrolylmethanemethyl)cysteine modification is found at Cys-239.

Belongs to the HMBS family. As to quaternary structure, monomer. Dipyrromethane serves as cofactor.

The enzyme catalyses 4 porphobilinogen + H2O = hydroxymethylbilane + 4 NH4(+). Its pathway is porphyrin-containing compound metabolism; protoporphyrin-IX biosynthesis; coproporphyrinogen-III from 5-aminolevulinate: step 2/4. In terms of biological role, tetrapolymerization of the monopyrrole PBG into the hydroxymethylbilane pre-uroporphyrinogen in several discrete steps. The polypeptide is Porphobilinogen deaminase (Dichelobacter nodosus (strain VCS1703A)).